Reading from the N-terminus, the 159-residue chain is Large ribosomal subunit protein uL11 (159 aa).

It belongs to the universal ribosomal protein uL11 family. In terms of assembly, part of the ribosomal stalk of the 50S ribosomal subunit. Interacts with L10 and the large rRNA to form the base of the stalk. L10 forms an elongated spine to which L12 dimers bind in a sequential fashion forming a multimeric L10(L12)X complex.

Functionally, forms part of the ribosomal stalk which helps the ribosome interact with GTP-bound translation factors. In Methanococcus maripaludis (strain C5 / ATCC BAA-1333), this protein is Large ribosomal subunit protein uL11.